The sequence spans 421 residues: MDLETKVKKMGLGHEQGFGAPCLKCKEKCEGFELHFWRKICRNCKCGQEEHDILLSNEEDRKVGKLFEDTKYTTLIAKLKSDGIPMYKRNVMILTNPVAARKNVSINTVTYEWAPPVQNQALARQYMQMLPKDKQPVAGSEGAQYRKKQLAKQLPAHDQDPSKCHELSPKEVKEMEQFVKKYKNEALGVGDVKLPCELDARGPNQMYIPGGDRSTSAAVGAMEDKSAEHKNTQYSCYCCKMSMKEGDPAIYAERAGYDKLWHPACFVCSICYELLVDMIYFWKDEKLYCGRHYCDSEKPRCAGCDELIFSNEYTQAENQNWHLKHFCCFDCDNILAGEIYVMVNDKPVCKPCYVKNHAVVCQGCHNAIDPEVQRVTYNNFSWHASTECFLCSCCSKCLIGQKFMPVEGMVFCSVECKKMMS.

The PET domain occupies 92–199 (MILTNPVAAR…GDVKLPCELD (108 aa)). Residues 134 to 164 (KQPVAGSEGAQYRKKQLAKQLPAHDQDPSKC) form a disordered region. The span at 155-164 (PAHDQDPSKC) shows a compositional bias: basic and acidic residues. LIM zinc-binding domains are found at residues 234 to 297 (YSCY…CDSE), 299 to 359 (PRCA…NHAV), and 362 to 421 (QGCH…KMMS).

The protein belongs to the prickle / espinas / testin family. As to quaternary structure, interacts via LIM domain 1 with ZYX. Interacts (via LIM domain 3) with ENAH and VASP. Interacts with ALKBH4, talin, actin, alpha-actinin, GRIP1 and PXN. Interacts (via LIM domain 2) with ACTL7A (via N-terminus). Heterodimer with ACTL7A; the heterodimer interacts with ENAH to form a heterotrimer.

Its subcellular location is the cytoplasm. The protein localises to the cell junction. It localises to the focal adhesion. Scaffold protein that may play a role in cell adhesion, cell spreading and in the reorganization of the actin cytoskeleton. Plays a role in the regulation of cell proliferation. May act as a tumor suppressor. The polypeptide is Testin (TES) (Eulemur macaco macaco (Black lemur)).